The primary structure comprises 408 residues: MQIPSKLKPYYENIAFEQEDSKMIINLGPQHPSAHGNLRLILELDGEQVVKARPCIGYMHRGMEKMAENMIYQEFIPTTDRMDYIAASANNYAYCAAVEKLCGLEIPRRAAVIRMILLELNRIASHLLWLATHALDIGAMSVFLYCFREREYVLDLIEKYCGARLTHSSMRIGGVMLDLPENYLEEMLVFCDKFPNDLKDYEDLLDDNRIWRLRTENVGVVTKEQALNWGCTGVMLRGSGIKYDIRKEEPYLLYNEVEFGVPYATQGDSYARYKVYMQEFRESLKILRQCATLYKDTPPEILATHPEYVSASKEQILTQNYSLMQHFVLITQGLKPPKGEVYVPTESPKGELGFFIHSDGTGRPYRLKARTPSYWHCAFFEEMLVGTYLADVVAIMGNVNIVLGEIDR.

This sequence belongs to the complex I 49 kDa subunit family. In terms of assembly, NDH-1 is composed of 14 different subunits. Subunits NuoB, C, D, E, F, and G constitute the peripheral sector of the complex.

The protein localises to the cell inner membrane. The catalysed reaction is a quinone + NADH + 5 H(+)(in) = a quinol + NAD(+) + 4 H(+)(out). Functionally, NDH-1 shuttles electrons from NADH, via FMN and iron-sulfur (Fe-S) centers, to quinones in the respiratory chain. The immediate electron acceptor for the enzyme in this species is believed to be ubiquinone. Couples the redox reaction to proton translocation (for every two electrons transferred, four hydrogen ions are translocated across the cytoplasmic membrane), and thus conserves the redox energy in a proton gradient. The polypeptide is NADH-quinone oxidoreductase subunit D (Campylobacter jejuni subsp. jejuni serotype O:6 (strain 81116 / NCTC 11828)).